The primary structure comprises 340 residues: DNA-directed RNA polymerase subunit alpha (340 aa).

Residues 1 to 236 (MLSLSKNWNT…EQLQLFIAFE (236 aa)) form an alpha N-terminal domain (alpha-NTD) region. Residues 251 to 340 (FSPYLLKRVD…LSKRYEDSYN (90 aa)) are alpha C-terminal domain (alpha-CTD).

This sequence belongs to the RNA polymerase alpha chain family. Homodimer. The RNAP catalytic core consists of 2 alpha, 1 beta, 1 beta' and 1 omega subunit. When a sigma factor is associated with the core the holoenzyme is formed, which can initiate transcription.

The enzyme catalyses RNA(n) + a ribonucleoside 5'-triphosphate = RNA(n+1) + diphosphate. Its function is as follows. DNA-dependent RNA polymerase catalyzes the transcription of DNA into RNA using the four ribonucleoside triphosphates as substrates. This Rickettsia typhi (strain ATCC VR-144 / Wilmington) protein is DNA-directed RNA polymerase subunit alpha.